We begin with the raw amino-acid sequence, 128 residues long: uncharacterized protein (128 aa).

The protein localises to the mitochondrion. This is an uncharacterized protein from Schizosaccharomyces pombe (strain 972 / ATCC 24843) (Fission yeast).